Here is a 488-residue protein sequence, read N- to C-terminus: Glutamyl-tRNA(Gln) amidotransferase subunit A (488 aa).

Catalysis depends on charge relay system residues lysine 76 and serine 152. Catalysis depends on serine 176, which acts as the Acyl-ester intermediate.

The protein belongs to the amidase family. GatA subfamily. Heterotrimer of A, B and C subunits.

It catalyses the reaction L-glutamyl-tRNA(Gln) + L-glutamine + ATP + H2O = L-glutaminyl-tRNA(Gln) + L-glutamate + ADP + phosphate + H(+). Allows the formation of correctly charged Gln-tRNA(Gln) through the transamidation of misacylated Glu-tRNA(Gln) in organisms which lack glutaminyl-tRNA synthetase. The reaction takes place in the presence of glutamine and ATP through an activated gamma-phospho-Glu-tRNA(Gln). The polypeptide is Glutamyl-tRNA(Gln) amidotransferase subunit A (Oceanobacillus iheyensis (strain DSM 14371 / CIP 107618 / JCM 11309 / KCTC 3954 / HTE831)).